Reading from the N-terminus, the 476-residue chain is Aspartyl/glutamyl-tRNA(Asn/Gln) amidotransferase subunit B (476 aa).

It belongs to the GatB/GatE family. GatB subfamily. Heterotrimer of A, B and C subunits.

It carries out the reaction L-glutamyl-tRNA(Gln) + L-glutamine + ATP + H2O = L-glutaminyl-tRNA(Gln) + L-glutamate + ADP + phosphate + H(+). It catalyses the reaction L-aspartyl-tRNA(Asn) + L-glutamine + ATP + H2O = L-asparaginyl-tRNA(Asn) + L-glutamate + ADP + phosphate + 2 H(+). Allows the formation of correctly charged Asn-tRNA(Asn) or Gln-tRNA(Gln) through the transamidation of misacylated Asp-tRNA(Asn) or Glu-tRNA(Gln) in organisms which lack either or both of asparaginyl-tRNA or glutaminyl-tRNA synthetases. The reaction takes place in the presence of glutamine and ATP through an activated phospho-Asp-tRNA(Asn) or phospho-Glu-tRNA(Gln). The protein is Aspartyl/glutamyl-tRNA(Asn/Gln) amidotransferase subunit B of Shouchella clausii (strain KSM-K16) (Alkalihalobacillus clausii).